The chain runs to 245 residues: uncharacterized protein (245 aa).

To M.tuberculosis Rv2927c.

This is an uncharacterized protein from Mycobacterium leprae (strain TN).